The primary structure comprises 231 residues: Ureidoacrylate amidohydrolase RutB (231 aa).

Residue Asp25 is the Proton acceptor of the active site. The active site involves Lys134. The Nucleophile role is filled by Cys167.

This sequence belongs to the isochorismatase family. RutB subfamily.

The catalysed reaction is (Z)-3-ureidoacrylate + H2O + H(+) = (Z)-3-aminoacrylate + NH4(+) + CO2. It catalyses the reaction (Z)-3-ureidoacrylate + H2O = (Z)-3-aminoacrylate + carbamate + H(+). It carries out the reaction (Z)-2-methylureidoacrylate + H2O + H(+) = (Z)-2-methylaminoacrylate + NH4(+) + CO2. In terms of biological role, hydrolyzes ureidoacrylate to form aminoacrylate and carbamate. The carbamate hydrolyzes spontaneously, thereby releasing one of the nitrogen atoms of the pyrimidine ring as ammonia and one of its carbon atoms as CO2. This is Ureidoacrylate amidohydrolase RutB from Escherichia coli O18:K1:H7 (strain IHE3034 / ExPEC).